The primary structure comprises 149 residues: Transcriptional repressor NrdR (149 aa).

A zinc finger spans residues 3–34 (CPFCSATDTKVIDSRLVADGHQVRRRRECAEC). The region spanning 49-139 (PRVVKQDGSR…VYRAFEDVSE (91 aa)) is the ATP-cone domain.

This sequence belongs to the NrdR family. It depends on Zn(2+) as a cofactor.

In terms of biological role, negatively regulates transcription of bacterial ribonucleotide reductase nrd genes and operons by binding to NrdR-boxes. The protein is Transcriptional repressor NrdR of Shewanella sediminis (strain HAW-EB3).